The sequence spans 210 residues: Fibrillarin-like rRNA/tRNA 2'-O-methyltransferase (210 aa).

Positions 1-34 (MTLPSGVERHDFGGETSLATQGQPVYGERTDGDW) are disordered. Residues 71 to 72 (TT), 87 to 88 (EF), 112 to 113 (DA), and 132 to 135 (DVAT) each bind S-adenosyl-L-methionine.

It belongs to the methyltransferase superfamily. Fibrillarin family. As to quaternary structure, interacts with nop5. Component of box C/D small ribonucleoprotein (sRNP) particles that contain rpl7ae, FlpA and nop5, plus a guide RNA.

In terms of biological role, involved in pre-rRNA and tRNA processing. Utilizes the methyl donor S-adenosyl-L-methionine to catalyze the site-specific 2'-hydroxyl methylation of ribose moieties in rRNA and tRNA. Site specificity is provided by a guide RNA that base pairs with the substrate. Methylation occurs at a characteristic distance from the sequence involved in base pairing with the guide RNA. The polypeptide is Fibrillarin-like rRNA/tRNA 2'-O-methyltransferase (Haloarcula marismortui (strain ATCC 43049 / DSM 3752 / JCM 8966 / VKM B-1809) (Halobacterium marismortui)).